Consider the following 78-residue polypeptide: Large ribosomal subunit protein bL28 (78 aa).

The protein belongs to the bacterial ribosomal protein bL28 family.

This chain is Large ribosomal subunit protein bL28, found in Synechococcus sp. (strain CC9311).